A 299-amino-acid polypeptide reads, in one-letter code: Pyridoxal 5'-phosphate synthase subunit PdxS (299 aa).

Asp29 contacts D-ribose 5-phosphate. Lys86 (schiff-base intermediate with D-ribose 5-phosphate) is an active-site residue. Residue Gly158 participates in D-ribose 5-phosphate binding. Arg170 is a binding site for D-glyceraldehyde 3-phosphate. Residues Gly219 and 240–241 (GS) contribute to the D-ribose 5-phosphate site.

This sequence belongs to the PdxS/SNZ family. In terms of assembly, in the presence of PdxT, forms a dodecamer of heterodimers.

It catalyses the reaction aldehydo-D-ribose 5-phosphate + D-glyceraldehyde 3-phosphate + L-glutamine = pyridoxal 5'-phosphate + L-glutamate + phosphate + 3 H2O + H(+). It participates in cofactor biosynthesis; pyridoxal 5'-phosphate biosynthesis. Catalyzes the formation of pyridoxal 5'-phosphate from ribose 5-phosphate (RBP), glyceraldehyde 3-phosphate (G3P) and ammonia. The ammonia is provided by the PdxT subunit. Can also use ribulose 5-phosphate and dihydroxyacetone phosphate as substrates, resulting from enzyme-catalyzed isomerization of RBP and G3P, respectively. This chain is Pyridoxal 5'-phosphate synthase subunit PdxS, found in Protochlamydia amoebophila (strain UWE25).